The sequence spans 349 residues: Zinc-type alcohol dehydrogenase-like protein PB24D3.08c (349 aa).

This sequence belongs to the zinc-containing alcohol dehydrogenase family. Quinone oxidoreductase subfamily.

The protein localises to the cytoplasm. It is found in the nucleus. The chain is Zinc-type alcohol dehydrogenase-like protein PB24D3.08c from Schizosaccharomyces pombe (strain 972 / ATCC 24843) (Fission yeast).